The sequence spans 728 residues: 1,4-alpha-glucan branching enzyme GlgB (728 aa).

D405 acts as the Nucleophile in catalysis. E458 (proton donor) is an active-site residue.

This sequence belongs to the glycosyl hydrolase 13 family. GlgB subfamily. Monomer.

The catalysed reaction is Transfers a segment of a (1-&gt;4)-alpha-D-glucan chain to a primary hydroxy group in a similar glucan chain.. It functions in the pathway glycan biosynthesis; glycogen biosynthesis. Functionally, catalyzes the formation of the alpha-1,6-glucosidic linkages in glycogen by scission of a 1,4-alpha-linked oligosaccharide from growing alpha-1,4-glucan chains and the subsequent attachment of the oligosaccharide to the alpha-1,6 position. The chain is 1,4-alpha-glucan branching enzyme GlgB from Serratia proteamaculans (strain 568).